Consider the following 484-residue polypeptide: ATP synthase subunit beta (484 aa).

Glycine 162–threonine 169 serves as a coordination point for ATP.

Belongs to the ATPase alpha/beta chains family. In terms of assembly, F-type ATPases have 2 components, CF(1) - the catalytic core - and CF(0) - the membrane proton channel. CF(1) has five subunits: alpha(3), beta(3), gamma(1), delta(1), epsilon(1). CF(0) has three main subunits: a(1), b(2) and c(9-12). The alpha and beta chains form an alternating ring which encloses part of the gamma chain. CF(1) is attached to CF(0) by a central stalk formed by the gamma and epsilon chains, while a peripheral stalk is formed by the delta and b chains.

The protein resides in the cell inner membrane. The enzyme catalyses ATP + H2O + 4 H(+)(in) = ADP + phosphate + 5 H(+)(out). In terms of biological role, produces ATP from ADP in the presence of a proton gradient across the membrane. The catalytic sites are hosted primarily by the beta subunits. The sequence is that of ATP synthase subunit beta from Agrobacterium fabrum (strain C58 / ATCC 33970) (Agrobacterium tumefaciens (strain C58)).